A 673-amino-acid chain; its full sequence is eEF1A lysine and N-terminal methyltransferase homolog (673 aa).

This sequence belongs to the methyltransferase superfamily.

The enzyme catalyses L-lysyl-[protein] + S-adenosyl-L-methionine = N(6)-methyl-L-lysyl-[protein] + S-adenosyl-L-homocysteine + H(+). The catalysed reaction is N(6)-methyl-L-lysyl-[protein] + S-adenosyl-L-methionine = N(6),N(6)-dimethyl-L-lysyl-[protein] + S-adenosyl-L-homocysteine + H(+). It catalyses the reaction N-terminal glycyl-L-lysyl-L-glutamyl-[protein] + 3 S-adenosyl-L-methionine = N-terminal N,N,N-trimethyl-glycyl-L-lysyl-L-glutamyl-[protein] + 3 S-adenosyl-L-homocysteine + 3 H(+). Its function is as follows. Dual methyltransferase. It catalyzes N-terminal methylation of target proteins via its C-terminus. It catalyzes dimethylation on lysine residues of target proteins via its N-terminus. The protein is eEF1A lysine and N-terminal methyltransferase homolog of Drosophila pseudoobscura pseudoobscura (Fruit fly).